A 257-amino-acid polypeptide reads, in one-letter code: uncharacterized protein (257 aa).

Disordered stretches follow at residues 1–164 (MERS…AGAC) and 225–257 (TAWS…RARA). The span at 10-28 (CGEEPRSGSRRLPKAEGDK) shows a compositional bias: basic and acidic residues. A compositionally biased stretch (basic residues) spans 54 to 65 (RPNRASGRRRRS). The span at 125 to 139 (RPTPRPCAGPAPPPA) shows a compositional bias: pro residues. Residues 144 to 162 (RCRRPRRWPRAGRRGRRAG) are compositionally biased toward basic residues.

This is an uncharacterized protein from Homo sapiens (Human).